The sequence spans 190 residues: NADH dehydrogenase [ubiquinone] iron-sulfur protein 3 (190 aa).

Belongs to the complex I 30 kDa subunit family. In terms of assembly, complex I is composed of about 45 different subunits. This is a component of the iron-sulfur (IP) fragment of the enzyme.

It is found in the mitochondrion inner membrane. The catalysed reaction is a ubiquinone + NADH + 5 H(+)(in) = a ubiquinol + NAD(+) + 4 H(+)(out). Its function is as follows. Core subunit of the mitochondrial membrane respiratory chain NADH dehydrogenase (Complex I) that is believed to belong to the minimal assembly required for catalysis. Complex I functions in the transfer of electrons from NADH to the respiratory chain. The immediate electron acceptor for the enzyme is believed to be ubiquinone. The protein is NADH dehydrogenase [ubiquinone] iron-sulfur protein 3 (NAD9) of Solanum tuberosum (Potato).